We begin with the raw amino-acid sequence, 155 residues long: Medium/long-chain acyl-CoA thioesterase YigI (155 aa).

The protein belongs to the YigI thioesterase family.

It localises to the cytoplasm. It catalyses the reaction a fatty acyl-CoA + H2O = a fatty acid + CoA + H(+). The enzyme catalyses a medium-chain fatty acyl-CoA + H2O = a medium-chain fatty acid + CoA + H(+). The catalysed reaction is a long-chain fatty acyl-CoA + H2O = a long-chain fatty acid + CoA + H(+). Its function is as follows. Displays thioesterase activity against medium- to long-chain acyl-CoA substrates. Is involved in the thioesterase-dependent beta-oxidation pathway of (9Z,11E)-octadecadienoate (conjugated linoleic acid or CLA), along with TesB and FadM. The polypeptide is Medium/long-chain acyl-CoA thioesterase YigI (yigI) (Shigella flexneri).